We begin with the raw amino-acid sequence, 154 residues long: SsrA-binding protein (154 aa).

Residues 126–154 (GKKKYDKREDMKKKEAQREVERAFRERQK) form a disordered region. A compositionally biased stretch (basic and acidic residues) spans 131 to 154 (DKREDMKKKEAQREVERAFRERQK).

It belongs to the SmpB family.

The protein resides in the cytoplasm. Functionally, required for rescue of stalled ribosomes mediated by trans-translation. Binds to transfer-messenger RNA (tmRNA), required for stable association of tmRNA with ribosomes. tmRNA and SmpB together mimic tRNA shape, replacing the anticodon stem-loop with SmpB. tmRNA is encoded by the ssrA gene; the 2 termini fold to resemble tRNA(Ala) and it encodes a 'tag peptide', a short internal open reading frame. During trans-translation Ala-aminoacylated tmRNA acts like a tRNA, entering the A-site of stalled ribosomes, displacing the stalled mRNA. The ribosome then switches to translate the ORF on the tmRNA; the nascent peptide is terminated with the 'tag peptide' encoded by the tmRNA and targeted for degradation. The ribosome is freed to recommence translation, which seems to be the essential function of trans-translation. In Anoxybacillus flavithermus (strain DSM 21510 / WK1), this protein is SsrA-binding protein.